A 747-amino-acid polypeptide reads, in one-letter code: ATPase family gene 2 protein homolog B (747 aa).

Position 1 is an N-acetylmethionine (methionine 1). ATP contacts are provided by residues 234–241 (GPPGVGKT) and 500–507 (GPPGCAKT).

Belongs to the AAA ATPase family. AFG2 subfamily. As to quaternary structure, part of the 55LCC heterohexameric ATPase complex composed at least of AIRIM, AFG2A, AFG2B and CINP. Associates with pre-60S ribosomal particles. Expressed in neurons; also expressed at lower level in astrocytes, oligodendrocytes and microglia.

The protein resides in the cytoplasm. Its subcellular location is the cytoskeleton. It is found in the spindle. The protein localises to the nucleus. It catalyses the reaction ATP + H2O = ADP + phosphate + H(+). Its activity is regulated as follows. In the context of 55LCC heterohexameric ATPase complex, the ATPase activity is stimulated by DNA binding and inhibited in presence of RNA. Its function is as follows. ATP-dependent chaperone part of the 55LCC heterohexameric ATPase complex which is chromatin-associated and promotes replisome proteostasis to maintain replication fork progression and genome stability. Required for replication fork progression, sister chromatid cohesion, and chromosome stability. The ATPase activity is specifically enhanced by replication fork DNA and is coupled to cysteine protease-dependent cleavage of replisome substrates in response to replication fork damage. Uses ATPase activity to process replisome substrates in S-phase, facilitating their proteolytic turnover from chromatin to ensure DNA replication and mitotic fidelity. Plays an essential role in the cytoplasmic maturation steps of pre-60S ribosomal particles by promoting the release of shuttling protein RSL24D1/RLP24 from the pre-ribosomal particles. In Rattus norvegicus (Rat), this protein is ATPase family gene 2 protein homolog B (Afg2b).